A 746-amino-acid polypeptide reads, in one-letter code: Protein C-mannosyl-transferase DPY19L1 (746 aa).

The disordered stretch occupies residues 1–68; the sequence is MVLQARSKHR…RAETAAPAPD (68 aa). The span at 14-27 shows a compositional bias: pro residues; that stretch reads PRPPRPARSSPPPL. 12 helical membrane-spanning segments follow: residues 93–113, 139–159, 227–247, 248–268, 308–328, 329–349, 357–377, 378–398, 405–425, 481–501, 520–540, and 562–582; these read STLL…TQLF, YSYF…WMIM, ACFY…LFFI, YGTY…CFFF, YRGS…PWQF, AQFV…VGYI, IIYT…GNSM, LLTS…AMKP, VSEL…TVTL, LLLP…INDM, GELV…ILIM, and LFGW…VLAA.

The protein belongs to the dpy-19 family.

The protein localises to the endoplasmic reticulum membrane. It catalyses the reaction L-tryptophyl-[protein] + a di-trans,poly-cis-dolichyl beta-D-mannosyl phosphate = C-alpha-D-mannosyl-L-tryptophyl-[protein] + a di-trans,poly-cis-dolichyl phosphate + H(+). Its pathway is protein modification; protein glycosylation. C-mannosyltransferase that mediates the C-mannosylation tryptophan residues on target proteins. The reaction occurs on the luminal side of the endoplasmic reticulum and involves the transfer of a mannose unit from a dolichylphosphate mannose (Dol-P-Man) donor to an acceptor protein containing a WxxW consensus sequence. C-mannosylates the first two tryptophans in the WxxWxxWxxC sequence motif in thrombospondin (TSP) type-1 repeats of UNC5A. Regulates neurite extension during development. This chain is Protein C-mannosyl-transferase DPY19L1 (Dpy19l1), found in Rattus norvegicus (Rat).